The sequence spans 792 residues: Probable exo-1,4-beta-xylosidase xlnD (792 aa).

The N-terminal stretch at 1 to 20 is a signal peptide; that stretch reads MSAIKSIATVLAAILPSVLA. Residues asparagine 23, asparagine 87, asparagine 142, and asparagine 246 are each glycosylated (N-linked (GlcNAc...) asparagine). The active site involves aspartate 310. Asparagine 326, asparagine 385, asparagine 391, asparagine 404, asparagine 438, asparagine 475, asparagine 479, asparagine 516, asparagine 677, and asparagine 699 each carry an N-linked (GlcNAc...) asparagine glycan.

The protein belongs to the glycosyl hydrolase 3 family.

The protein localises to the secreted. It catalyses the reaction Hydrolysis of (1-&gt;4)-beta-D-xylans, to remove successive D-xylose residues from the non-reducing termini.. Its pathway is glycan degradation; xylan degradation. Its function is as follows. Xylan 1,4-beta-xylosidase involved in the hydrolysis of xylan, a major structural heterogeneous polysaccharide found in plant biomass representing the second most abundant polysaccharide in the biosphere, after cellulose. This chain is Probable exo-1,4-beta-xylosidase xlnD (xlnD), found in Aspergillus clavatus (strain ATCC 1007 / CBS 513.65 / DSM 816 / NCTC 3887 / NRRL 1 / QM 1276 / 107).